The primary structure comprises 237 residues: Uridylate kinase (237 aa).

12–15 (KLSG) lines the ATP pocket. An involved in allosteric activation by GTP region spans residues 20-25 (GDEGFG). A UMP-binding site is contributed by glycine 54. Residues glycine 55 and arginine 59 each coordinate ATP. UMP is bound by residues aspartate 74 and 135–142 (TGSPFFTT). 3 residues coordinate ATP: threonine 162, tyrosine 168, and aspartate 171.

It belongs to the UMP kinase family. As to quaternary structure, homohexamer.

It localises to the cytoplasm. It catalyses the reaction UMP + ATP = UDP + ADP. The protein operates within pyrimidine metabolism; CTP biosynthesis via de novo pathway; UDP from UMP (UMPK route): step 1/1. Allosterically activated by GTP. Inhibited by UTP. Catalyzes the reversible phosphorylation of UMP to UDP. This Actinobacillus pleuropneumoniae serotype 5b (strain L20) protein is Uridylate kinase.